An 807-amino-acid chain; its full sequence is Leucine--tRNA ligase (807 aa).

The short motif at 40–51 (PYPSGTGLHVGH) is the 'HIGH' region element. A 'KMSKS' region motif is present at residues 576-580 (KMSKS). Lys579 lines the ATP pocket.

This sequence belongs to the class-I aminoacyl-tRNA synthetase family.

The protein localises to the cytoplasm. It catalyses the reaction tRNA(Leu) + L-leucine + ATP = L-leucyl-tRNA(Leu) + AMP + diphosphate. In Pelodictyon phaeoclathratiforme (strain DSM 5477 / BU-1), this protein is Leucine--tRNA ligase.